Reading from the N-terminus, the 242-residue chain is Small ribosomal subunit protein uS2 (242 aa).

Belongs to the universal ribosomal protein uS2 family.

The protein is Small ribosomal subunit protein uS2 of Shewanella amazonensis (strain ATCC BAA-1098 / SB2B).